The sequence spans 174 residues: Ribosome rescue factor SmrB (174 aa).

The region spanning 96 to 171 (LDLHGMNQQQ…GDSAILVLLD (76 aa)) is the Smr domain.

It belongs to the SmrB family. Associates with collided ribosomes, but not with correctly translating polysomes.

In terms of biological role, acts as a ribosome collision sensor. Detects stalled/collided disomes (pairs of ribosomes where the leading ribosome is stalled and a second ribosome has collided with it) and endonucleolytically cleaves mRNA at the 5' boundary of the stalled ribosome. Stalled/collided disomes form a new interface (primarily via the 30S subunits) that binds SmrB. Cleaved mRNA becomes available for tmRNA ligation, leading to ribosomal subunit dissociation and rescue of stalled ribosomes. This Aeromonas hydrophila subsp. hydrophila (strain ATCC 7966 / DSM 30187 / BCRC 13018 / CCUG 14551 / JCM 1027 / KCTC 2358 / NCIMB 9240 / NCTC 8049) protein is Ribosome rescue factor SmrB.